A 412-amino-acid polypeptide reads, in one-letter code: Class E basic helix-loop-helix protein 40 (412 aa).

Residues 1-21 (MERIPSAQPPPTCLPKAPGLE) form a disordered region. Residues 1–139 (MERIPSAQPP…LSGRNVEAGQ (139 aa)) are essential for interaction with BMAL1, E-box binding and repressor activity against the CLOCK-BMAL1 heterodimer. The bHLH domain maps to 52–107 (TYKLPHRLIEKKRRDRINECIAQLKDLLPEHLKLTTLGHLEKAVVLELTLKHVKAL). Positions 75 to 79 (LKDLL) are necessary for interaction with RXRA and repressor activity against RXRA. One can recognise an Orange domain in the interval 142-175 (FCSGFQTCAREVLQYLAKHENTRDLKSSQLVTHL). Lysine 159 participates in a covalent cross-link: Glycyl lysine isopeptide (Lys-Gly) (interchain with G-Cter in SUMO1, SUMO2 and SUMO3). Lysine 167 is covalently cross-linked (Glycyl lysine isopeptide (Lys-Gly) (interchain with G-Cter in SUMO2)). 2 disordered regions span residues 182–256 (LLQG…ELRV) and 279–298 (KQES…SDDE). Residue serine 235 is modified to Phosphoserine. Lysine 279 participates in a covalent cross-link: Glycyl lysine isopeptide (Lys-Gly) (interchain with G-Cter in SUMO1); alternate. A Glycyl lysine isopeptide (Lys-Gly) (interchain with G-Cter in SUMO1, SUMO2 and SUMO3); alternate cross-link involves residue lysine 279. Lysine 279 is covalently cross-linked (Glycyl lysine isopeptide (Lys-Gly) (interchain with G-Cter in SUMO2); alternate). Lysine 288 participates in a covalent cross-link: Glycyl lysine isopeptide (Lys-Gly) (interchain with G-Cter in SUMO2). Residue serine 383 is modified to Phosphoserine.

In terms of assembly, homodimer. Heterodimer with BHLHE41/DEC2. Interacts with TCF3/E47. Interacts with ubiquitin-conjugating enzyme UBE2I/UBC9. Interacts with HDAC1, SUMO1, RXRA and BMAL1. In terms of processing, ubiquitinated; which may lead to proteasomal degradation. Post-translationally, sumoylation inhibits its ubiquitination and promotes its negative regulation of the CLOCK-BMAL1 heterodimer transcriptional activator activity.

The protein resides in the cytoplasm. Its subcellular location is the nucleus. Transcriptional repressor involved in the regulation of the circadian rhythm by negatively regulating the activity of the clock genes and clock-controlled genes. Acts as the negative limb of a novel autoregulatory feedback loop (DEC loop) which differs from the one formed by the PER and CRY transcriptional repressors (PER/CRY loop). Both these loops are interlocked as it represses the expression of PER1/2 and in turn is repressed by PER1/2 and CRY1/2. Represses the activity of the circadian transcriptional activator: CLOCK-BMAL1|BMAL2 heterodimer by competing for the binding to E-box elements (5'-CACGTG-3') found within the promoters of its target genes. Negatively regulates its own expression and the expression of DBP and BHLHE41/DEC2. Acts as a corepressor of RXR and the RXR-LXR heterodimers and represses the ligand-induced RXRA and NR1H3/LXRA transactivation activity. May be involved in the regulation of chondrocyte differentiation via the cAMP pathway. Represses the transcription of NR0B2 and attentuates the transactivation of NR0B2 by the CLOCK-BMAL1 complex. Drives the circadian rhythm of blood pressure through transcriptional repression of ATP1B1 in the cardiovascular system. This is Class E basic helix-loop-helix protein 40 (BHLHE40) from Bos taurus (Bovine).